The following is a 104-amino-acid chain: MGVEGMWNVFLFSLQVAALPSIKCSINGSGFSSTKGRQYREAWGAISPSDSMELIRLSEIASGKHAHKALKRLLALESLPPQSTRVFSSPRSHRRMALAATFPS.

A signal peptide spans 1 to 18; the sequence is MGVEGMWNVFLFSLQVAA. The N-linked (GlcNAc...) asparagine; by host glycan is linked to Asn-27.

This is an uncharacterized protein from Fowl adenovirus A serotype 1 (strain CELO / Phelps) (FAdV-1).